A 216-amino-acid polypeptide reads, in one-letter code: Adenylate kinase (216 aa).

10-15 (GAGKGT) contacts ATP. The segment at 30–59 (STGDMIRETIKSDSEIGKELKKVLDAGQLV) is NMP. Residues threonine 31, arginine 36, 57–59 (QLV), and glutamine 92 contribute to the AMP site. The interval 122–159 (GRRVHPASGRTYHTKFNPPKVEGKDDITGEDLITRTDD) is LID. ATP-binding positions include arginine 123 and 132–133 (TY). Residues arginine 156 and arginine 167 each coordinate AMP. Residue glutamine 202 coordinates ATP.

It belongs to the adenylate kinase family. As to quaternary structure, monomer.

It localises to the cytoplasm. The catalysed reaction is AMP + ATP = 2 ADP. It participates in purine metabolism; AMP biosynthesis via salvage pathway; AMP from ADP: step 1/1. Functionally, catalyzes the reversible transfer of the terminal phosphate group between ATP and AMP. Plays an important role in cellular energy homeostasis and in adenine nucleotide metabolism. The sequence is that of Adenylate kinase from Francisella philomiragia subsp. philomiragia (strain ATCC 25017 / CCUG 19701 / FSC 153 / O#319-036).